A 265-amino-acid polypeptide reads, in one-letter code: Tryptophan 2,3-dioxygenase (265 aa).

Residues 38–42 (FIVVH) and arginine 104 contribute to the substrate site. Histidine 223 is a binding site for heme. Threonine 237 contacts substrate.

This sequence belongs to the tryptophan 2,3-dioxygenase family. In terms of assembly, homotetramer. Requires heme as cofactor.

The catalysed reaction is L-tryptophan + O2 = N-formyl-L-kynurenine. It functions in the pathway amino-acid degradation; L-tryptophan degradation via kynurenine pathway; L-kynurenine from L-tryptophan: step 1/2. Functionally, heme-dependent dioxygenase that catalyzes the oxidative cleavage of the L-tryptophan (L-Trp) pyrrole ring and converts L-tryptophan to N-formyl-L-kynurenine. Catalyzes the oxidative cleavage of the indole moiety. This Anaeromyxobacter sp. (strain K) protein is Tryptophan 2,3-dioxygenase.